A 1599-amino-acid polypeptide reads, in one-letter code: Protein TOPAZ1 (1599 aa).

4 disordered regions span residues 1–42 (MVAQ…KESL), 159–185 (GCMHVPENSSKSKKENPRSLIDKTDPS), 802–836 (PNVAEEHQSADSKHMELPEKKEPSDHLRELPVPDP), and 867–889 (VTHETSSNEKPGGLSEQTKSSDL). Basic and acidic residues-rich tracts occupy residues 168–183 (SKSKKENPRSLIDKTD) and 805–832 (AEEHQSADSKHMELPEKKEPSDHLRELP). Residues 874–884 (NEKPGGLSEQT) are compositionally biased toward polar residues.

As to expression, expressed in both adult testis and fetal ovary, mostly in germ cells (at protein level).

It is found in the cytoplasm. The protein resides in the cytosol. Functionally, important for normal spermatogenesis and male fertility. Specifically required for progression to the post-meiotic stages of spermatocyte development. Seems to be necessary for normal expression levels of a number of testis-expressed gene transcripts, although its role in this process is unclear. In Ovis aries (Sheep), this protein is Protein TOPAZ1 (TOPAZ1).